Consider the following 419-residue polypeptide: Gamma-glutamyl phosphate reductase (419 aa).

The protein belongs to the gamma-glutamyl phosphate reductase family.

It localises to the cytoplasm. The enzyme catalyses L-glutamate 5-semialdehyde + phosphate + NADP(+) = L-glutamyl 5-phosphate + NADPH + H(+). It participates in amino-acid biosynthesis; L-proline biosynthesis; L-glutamate 5-semialdehyde from L-glutamate: step 2/2. In terms of biological role, catalyzes the NADPH-dependent reduction of L-glutamate 5-phosphate into L-glutamate 5-semialdehyde and phosphate. The product spontaneously undergoes cyclization to form 1-pyrroline-5-carboxylate. This Yersinia enterocolitica serotype O:8 / biotype 1B (strain NCTC 13174 / 8081) protein is Gamma-glutamyl phosphate reductase.